The following is a 154-amino-acid chain: Putative pre-16S rRNA nuclease (154 aa).

This sequence belongs to the YqgF nuclease family.

The protein resides in the cytoplasm. Could be a nuclease involved in processing of the 5'-end of pre-16S rRNA. This is Putative pre-16S rRNA nuclease from Rickettsia canadensis (strain McKiel).